We begin with the raw amino-acid sequence, 286 residues long: Transcription factor bHLH11 (286 aa).

The segment at 1-34 (MDQPMKPKTCSESDFADDSSASSSSSSGQNLRGA) is disordered. The span at 18-27 (DSSASSSSSS) shows a compositional bias: low complexity. The bHLH domain maps to 44–94 (AVCSQKAEREKLRRDKLKEQFLELGNALDPNRPKSDKASVLTDTIQMLKDV). 2 disordered regions span residues 182 to 202 (EQQA…MKQD) and 244 to 286 (QQDV…MLKP). Composition is skewed to low complexity over residues 183–198 (QQAS…ADAS) and 255–269 (SLTT…YSLS). Residues 270–279 (QAVQDSSPGT) are compositionally biased toward polar residues.

Homodimer. Expressed consitutively in roots, leaves, stems, and flowers.

Its subcellular location is the nucleus. The chain is Transcription factor bHLH11 (BHLH11) from Arabidopsis thaliana (Mouse-ear cress).